The chain runs to 433 residues: O-methyltransferase hasC (433 aa).

S-adenosyl-L-methionine is bound by residues glutamate 265 and 293–295 (GDF). Histidine 313 serves as the catalytic Proton acceptor. Residues 413 to 433 (SPRANGNGNSAGGLEWESELM) form a disordered region.

The protein belongs to the class I-like SAM-binding methyltransferase superfamily. Cation-independent O-methyltransferase family. COMT subfamily.

It participates in secondary metabolite biosynthesis. O-methyltransferase; part of the gene cluster that mediates the biosynthesis of hexadehydro-astechrome (HAS), a tryptophan-derived iron(III)-complex that acts as a virulence factor in infected mice. Within the pathway, hasC, with the cytochrome P450 monooxygenase hasH and the FAD-linked oxidoreductase hasG, convert the hasE-prenylated Trp-Ala-dipeptide into an O-methylated diketopiperazine that is then released from the hasD NRPS. The HAS biosynthesis begins with the synthesis of a tethered Trp-Ala dipeptide by the NRPS hasD. The 7-dimethylallyltryptophan synthase hasE then catalyzes the prenylation of the hasD-tethered tryptophan or the resulting tethered Trp-Ala dipeptide at the C-7 position of the indole moiety. HAS biosynthesis continues via tethered intermediates with the succesive actions of the cytochrome P450 monooxygenase hasH, the O-methyltransferase hasC, and the FAD-linked oxidoreductase hasG. The resulting O-methylated diketopiperazine is then released from hasD. Finally, three O-methylated diketopiperazine molecules assemble in a trimeric complex with Fe(III) to produce hexadehydro-astechrome. This Aspergillus fumigatus (strain CBS 144.89 / FGSC A1163 / CEA10) (Neosartorya fumigata) protein is O-methyltransferase hasC.